A 51-amino-acid chain; its full sequence is Lantibiotic streptococcin A-M49 (51 aa).

Residues 1-25 (MTKEHEIINSIQEVSLEELDQIIGA) constitute a propeptide that is removed on maturation. Cross-links (beta-methyllanthionine (Thr-Cys)) lie at residues 33 to 38 (TISHEC) and 42 to 50 (TWAFLATCC). The lanthionine (Ser-Cys) cross-link spans 35-49 (SHECHLNTWAFLATC). The residue at position 48 (threonine 48) is a 2,3-didehydrobutyrine.

The protein belongs to the type A lantibiotic family. Maturation of lantibiotics involves the enzymatic conversion of Thr, and Ser into dehydrated AA and the formation of thioether bonds with cysteine. This is followed by membrane translocation and cleavage of the modified precursor.

The protein resides in the secreted. The protein localises to the cell surface. In terms of biological role, lanthionine-containing peptide antibiotic (lantibiotic) active on certain Gram-positive bacteria. The bactericidal activity of lantibiotics is based on depolarization of energized bacterial cytoplasmic membranes, initiated by the formation of aqueous transmembrane pores. This chain is Lantibiotic streptococcin A-M49 (scnA'), found in Streptococcus pyogenes serotype M49.